Reading from the N-terminus, the 251-residue chain is Adapter protein MecA (251 aa).

The protein belongs to the MecA family. As to quaternary structure, homodimer.

Enables the recognition and targeting of unfolded and aggregated proteins to the ClpC protease or to other proteins involved in proteolysis. In Streptococcus agalactiae serotype III (strain NEM316), this protein is Adapter protein MecA.